A 189-amino-acid chain; its full sequence is UPF0688 protein C1orf174 homolog (189 aa).

A disordered region spans residues 53-137 (QMAGDGGEAK…TTDPSVFFDE (85 aa)). Composition is skewed to basic and acidic residues over residues 59-73 (GEAK…HGEV) and 93-103 (APGERRGKENS).

This sequence belongs to the UPF0688 family.

The protein resides in the nucleus. This chain is UPF0688 protein C1orf174 homolog, found in Danio rerio (Zebrafish).